We begin with the raw amino-acid sequence, 363 residues long: MIIATPEVQDINSFSRLESLQEVYGILWVLAPISIYVLAITIGVLVIVWLEREISAGIQQRIGPEYASPLGILQALADGTKLLFKENLLPSRGNSSLFSIGPSIAVIAILLSYSVIPFSYNLVLADLNIGIFLWIAISSIAPIGLLMSGYGSNNKYSFLGGLRAAAQSISYEIPLTLCVLSISLLSNSLSTVDIVGAQSKYGFWGWNLWRQPIGFIVFLISSLAECERLPFDLPEAEEELVAGYQTEYSGIKFGLFYVASYLNLLVSSLFVTVLYLGGSNLSIPYIFVPGLVEINKADGIFGTTIGIFITLAKTYLFLFIPIATRWTLPRLRMDQLLNLGWKFLLPISLGNLLLTTSSQLLSL.

The next 7 membrane-spanning stretches (helical) occupy residues 28-48 (WVLA…LVIV), 98-118 (FSIG…VIPF), 129-149 (IGIF…LMSG), 253-273 (FGLF…FVTV), 274-294 (LYLG…LVEI), 300-320 (IFGT…FLFI), and 336-356 (LLNL…LLTT).

The protein belongs to the complex I subunit 1 family. In terms of assembly, NDH is composed of at least 16 different subunits, 5 of which are encoded in the nucleus.

Its subcellular location is the plastid. It localises to the chloroplast thylakoid membrane. It carries out the reaction a plastoquinone + NADH + (n+1) H(+)(in) = a plastoquinol + NAD(+) + n H(+)(out). The catalysed reaction is a plastoquinone + NADPH + (n+1) H(+)(in) = a plastoquinol + NADP(+) + n H(+)(out). NDH shuttles electrons from NAD(P)H:plastoquinone, via FMN and iron-sulfur (Fe-S) centers, to quinones in the photosynthetic chain and possibly in a chloroplast respiratory chain. The immediate electron acceptor for the enzyme in this species is believed to be plastoquinone. Couples the redox reaction to proton translocation, and thus conserves the redox energy in a proton gradient. The chain is NAD(P)H-quinone oxidoreductase subunit 1, chloroplastic from Citrus sinensis (Sweet orange).